The sequence spans 177 residues: Large ribosomal subunit protein uL10 (177 aa).

This sequence belongs to the universal ribosomal protein uL10 family. In terms of assembly, part of the ribosomal stalk of the 50S ribosomal subunit. The N-terminus interacts with L11 and the large rRNA to form the base of the stalk. The C-terminus forms an elongated spine to which L12 dimers bind in a sequential fashion forming a multimeric L10(L12)X complex.

Its function is as follows. Forms part of the ribosomal stalk, playing a central role in the interaction of the ribosome with GTP-bound translation factors. The polypeptide is Large ribosomal subunit protein uL10 (Xanthomonas axonopodis pv. citri (strain 306)).